The sequence spans 142 residues: Large ribosomal subunit protein uL13 (142 aa).

The protein belongs to the universal ribosomal protein uL13 family. Part of the 50S ribosomal subunit.

Functionally, this protein is one of the early assembly proteins of the 50S ribosomal subunit, although it is not seen to bind rRNA by itself. It is important during the early stages of 50S assembly. This Thioalkalivibrio sulfidiphilus (strain HL-EbGR7) protein is Large ribosomal subunit protein uL13.